We begin with the raw amino-acid sequence, 249 residues long: Undecaprenyl-diphosphatase (249 aa).

8 helical membrane passes run Gly11–Phe31, Pro35–Val55, Leu80–Ser100, Val101–Leu121, Ile135–Ile155, Ala175–Leu195, Ala202–Val222, and Val226–Leu246.

Belongs to the UppP family.

The protein resides in the cell membrane. It catalyses the reaction di-trans,octa-cis-undecaprenyl diphosphate + H2O = di-trans,octa-cis-undecaprenyl phosphate + phosphate + H(+). Its function is as follows. Catalyzes the dephosphorylation of undecaprenyl diphosphate (UPP). This chain is Undecaprenyl-diphosphatase, found in Methanococcus maripaludis (strain C5 / ATCC BAA-1333).